We begin with the raw amino-acid sequence, 453 residues long: Allantoinase (453 aa).

The Zn(2+) site is built by histidine 59, histidine 61, lysine 146, histidine 186, histidine 242, and aspartate 315. An N6-carboxylysine modification is found at lysine 146.

The protein belongs to the metallo-dependent hydrolases superfamily. Allantoinase family. In terms of assembly, homotetramer. The cofactor is Zn(2+). In terms of processing, carboxylation allows a single lysine to coordinate two zinc ions.

The catalysed reaction is (S)-allantoin + H2O = allantoate + H(+). It participates in nitrogen metabolism; (S)-allantoin degradation; allantoate from (S)-allantoin: step 1/1. Its function is as follows. Catalyzes the conversion of allantoin (5-ureidohydantoin) to allantoic acid by hydrolytic cleavage of the five-member hydantoin ring. This chain is Allantoinase, found in Escherichia coli O127:H6 (strain E2348/69 / EPEC).